Here is a 451-residue protein sequence, read N- to C-terminus: DNA double-strand break repair nuclease NurA (451 aa).

Mn(2+) is bound by residues Asp-51 and Asp-126.

This sequence belongs to the NurA family. As to quaternary structure, homodimer. Interacts with HerA. It depends on Mn(2+) as a cofactor.

Its activity is regulated as follows. Exonuclease activity is stimulated in the presence of HerA. Its function is as follows. Involved in DNA double-strand break (DSB) repair. Probably acts with HerA to stimulate resection of the 5' strand and produce the long 3' single-strand that is required for RadA loading. Exhibits 5' endonuclease activity and both 5' and 3' exonuclease activities. The chain is DNA double-strand break repair nuclease NurA from Pyrococcus furiosus (strain ATCC 43587 / DSM 3638 / JCM 8422 / Vc1).